We begin with the raw amino-acid sequence, 426 residues long: PHD finger-containing protein 6 (426 aa).

Residues 9–59 (RSICETCGHQGWKNSLVTCSKCRIACEHCYCMRESSFETSIHFVCADCSMR) form a PHD-type zinc finger. Zn(2+)-binding residues include cysteine 12, cysteine 15, cysteine 27, cysteine 30, histidine 36, cysteine 39, cysteine 53, and cysteine 56. Disordered regions lie at residues 122 to 144 (TFRV…TAGF) and 185 to 205 (RQAS…GDGA).

Interacts directly with AIPP3/BDT1.

In terms of biological role, together with AIPP3/BDT1, cooperates to form a BAH-PHD bivalent histone reader complex able to read histone H3 lysine 27 trimethylation (H3K27me3) histone marks in order to regulate transcription, especially to prevent early flowering; promotes AIPP3/BDT1 binding to H3K27me3. The protein is PHD finger-containing protein 6 of Arabidopsis thaliana (Mouse-ear cress).